The sequence spans 695 residues: Lasso peptide isopeptidase AtxE2 (695 aa).

Residues 1–30 (MRSSKIRCPGAIRVGTLVTAFGCLPHVAFA) form the signal peptide. Intrachain disulfides connect Cys-296–Cys-301 and Cys-354–Cys-363. Ser-527 functions as the Nucleophile in the catalytic mechanism. An intrachain disulfide couples Cys-551 to Cys-552. Residues Glu-610 and His-638 each act as charge relay system in the active site.

The protein resides in the cytoplasm. Lasso peptide isopeptidase that specifically hydrolyzes Astexin-2 and Astexin-3, converting them to linear peptides. Has only a few specific contacts with substrates, because it recognizes Astexin knotted structure (principally the loop structure). Its binding to lasso peptides opens them to expose the isopeptide bonds for hydrolysis. The sequence is that of Lasso peptide isopeptidase AtxE2 from Asticcacaulis excentricus (strain ATCC 15261 / DSM 4724 / KCTC 12464 / NCIMB 9791 / VKM B-1370 / CB 48).